We begin with the raw amino-acid sequence, 115 residues long: uncharacterized protein (115 aa).

This is an uncharacterized protein from Bacillus subtilis (strain 168).